A 352-amino-acid chain; its full sequence is Dolichol-phosphate mannosyltransferase (352 aa).

Over 1-229 the chain is Cytoplasmic; it reads MKVSVIIPTY…HIYRLMKWEG (229 aa). Residues Pro8, Tyr10, Glu12, Val37, Asp39, Asp89, Ala90, Asp91, Gln93, Arg117, Val156, Lys178, Arg202, and Lys208 each coordinate GDP-alpha-D-mannose. Mg(2+) is bound by residues Asp91 and Gln93. Positions 91 and 93 each coordinate Mn(2+). Residues 230–256 traverse the membrane as a helical segment; the sequence is EIDRIVKFSIVGLSGILVNEGFLWLFV. The Extracellular segment spans residues 257-261; it reads NLGIP. Residues 262–286 form a helical membrane-spanning segment; the sequence is KEIAVIPAVELSILNNFFWNDIWTF. Topologically, residues 287–293 are cytoplasmic; sequence KDIRRGS. The helical transmembrane segment at 294 to 320 threads the bilayer; it reads IFSRLLKFHIAALSGAVVNFIVYWILL. At 321 to 325 the chain is on the extracellular side; that stretch reads FLGIH. A helical membrane pass occupies residues 326–350; that stretch reads YLIANLVGIVLSFGVRYVINRHVTW. The Cytoplasmic portion of the chain corresponds to 351–352; it reads AT.

Belongs to the glycosyltransferase 2 family. The cofactor is Mg(2+). Mn(2+) serves as cofactor. Requires Ca(2+) as cofactor.

It localises to the cell membrane. The enzyme catalyses a di-trans,poly-cis-dolichyl phosphate + GDP-alpha-D-mannose = a di-trans,poly-cis-dolichyl beta-D-mannosyl phosphate + GDP. It functions in the pathway protein modification; protein glycosylation. Its function is as follows. Transfers mannose from GDP-mannose to dolichol monophosphate to form dolichol phosphate mannose (Dol-P-Man) which is the mannosyl donor in pathways leading to N-glycosylation, glycosyl phosphatidylinositol membrane anchoring, and O-mannosylation of proteins. This chain is Dolichol-phosphate mannosyltransferase, found in Pyrococcus furiosus (strain ATCC 43587 / DSM 3638 / JCM 8422 / Vc1).